A 589-amino-acid chain; its full sequence is Guanylate-binding protein 2 (589 aa).

Residues 1–309 form a GTPase domain (Globular) region; that stretch reads MASEIHMLQP…GAISSGSLPC (309 aa). The region spanning 35 to 276 is the GB1/RHD3-type G domain; that stretch reads NQPVVVVAIV…FTSYIFSYSA (242 aa). GTP contacts are provided by residues 45 to 52, 181 to 182, and Leu245; these read GLYRTGKS and RD. Cys586 carries the post-translational modification Cysteine methyl ester. Cys586 carries S-geranylgeranyl cysteine lipidation. The propeptide at 587 to 589 is removed in mature form; that stretch reads TIL.

The protein belongs to the TRAFAC class dynamin-like GTPase superfamily. GB1/RHD3 GTPase family. GB1 subfamily. Homodimer; homodimerization occurs upon GTP-binding and is required for the association with membranous structures. Heterodimer with other family members, including GBP1, GBP3, GBP4 and GBP5. In terms of processing, isoprenylation is required for proper subcellular location. In terms of tissue distribution, widely expressed.

It localises to the cytoplasmic vesicle membrane. The protein localises to the golgi apparatus membrane. It is found in the cytoplasm. Its subcellular location is the perinuclear region. The catalysed reaction is GTP + H2O = GDP + phosphate + H(+). Interferon (IFN)-inducible GTPase that plays important roles in innate immunity against a diverse range of bacterial, viral and protozoan pathogens. Hydrolyzes GTP to GMP in 2 consecutive cleavage reactions, but the major reaction product is GDP. Following infection, recruited to the pathogen-containing vacuoles or vacuole-escaped bacteria and acts as a positive regulator of inflammasome assembly by promoting the release of inflammasome ligands from bacteria. Acts by promoting lysis of pathogen-containing vacuoles, releasing pathogens into the cytosol. Following pathogen release in the cytosol, promotes recruitment of proteins that mediate bacterial cytolysis: this liberates ligands that are detected by inflammasomes, such as lipopolysaccharide (LPS) that activates the non-canonical CASP4/CASP11 inflammasome or double-stranded DNA (dsDNA) that activates the AIM2 inflammasome. Confers protection to the protozoan pathogen Toxoplasma gondii. Independently of its GTPase activity, acts as an inhibitor of various viruses infectivity by inhibiting FURIN-mediated maturation of viral envelope proteins. The chain is Guanylate-binding protein 2 (Gbp2) from Rattus norvegicus (Rat).